A 38-amino-acid polypeptide reads, in one-letter code: MKVRSSVKKRSPDDIIVRRKGRVYIINKKNRRHNQRQG.

It belongs to the bacterial ribosomal protein bL36 family.

The chain is Large ribosomal subunit protein bL36 from Phytoplasma mali (strain AT).